A 134-amino-acid chain; its full sequence is UPF0102 protein SYNW1051 (134 aa).

The protein belongs to the UPF0102 family.

The chain is UPF0102 protein SYNW1051 from Parasynechococcus marenigrum (strain WH8102).